The following is a 309-amino-acid chain: MTKMRESEIIRMFIEEFDNHALGDDAGFVRFNDSWLLVTSDMLVWRTDVPDFMTPEEAGKKVVTMNVSDIAAMGGLPLAFFFSLGVPENTDEKTLRGIAKGINKGAKEYGVKIVSGDTNEAREIIIDGGAIGRGSRLLLRSNAKPGDLVCVTGELGRPLTALLLWLKGEEIPPKILEKAKNPKAREREGIELSNYANSAIDISDGLSKELWEIARSSNVRIVIDEDKIPVNEEVREIVKDPIKIALASGEEFELVFTIPKENLGNISFDFTIIGRVEEGEGVYIKREDKMERLPILGWEHLKGGDYVNL.

Residues aspartate 25, threonine 39, serine 40, and aspartate 41 each coordinate Mg(2+). Aspartate 48 provides a ligand contact to substrate. Mg(2+)-binding residues include aspartate 69 and aspartate 117. Residues 116–117 and arginine 140 contribute to the ATP site; that span reads GD. Aspartate 201 contacts Mg(2+). Serine 203 is an ATP binding site. Aspartate 204 provides a ligand contact to Mg(2+). Glutamate 250 and tryptophan 298 together coordinate substrate.

It belongs to the thiamine-monophosphate kinase family.

It carries out the reaction thiamine phosphate + ATP = thiamine diphosphate + ADP. It participates in cofactor biosynthesis; thiamine diphosphate biosynthesis; thiamine diphosphate from thiamine phosphate: step 1/1. In terms of biological role, catalyzes the ATP-dependent phosphorylation of thiamine-monophosphate (TMP) to form thiamine-pyrophosphate (TPP), the active form of vitamin B1. This Pyrococcus horikoshii (strain ATCC 700860 / DSM 12428 / JCM 9974 / NBRC 100139 / OT-3) protein is Thiamine-monophosphate kinase.